The sequence spans 278 residues: Shikimate dehydrogenase (NADP(+)) (278 aa).

Residues 18–20 (SRS) and threonine 65 contribute to the shikimate site. Lysine 69 functions as the Proton acceptor in the catalytic mechanism. Glutamate 80 is an NADP(+) binding site. Positions 89 and 104 each coordinate shikimate. NADP(+) contacts are provided by residues 129 to 133 (GAGGS) and leucine 218. Residue tyrosine 220 participates in shikimate binding. Position 241 (glycine 241) interacts with NADP(+).

This sequence belongs to the shikimate dehydrogenase family. Homodimer.

It catalyses the reaction shikimate + NADP(+) = 3-dehydroshikimate + NADPH + H(+). It participates in metabolic intermediate biosynthesis; chorismate biosynthesis; chorismate from D-erythrose 4-phosphate and phosphoenolpyruvate: step 4/7. In terms of biological role, involved in the biosynthesis of the chorismate, which leads to the biosynthesis of aromatic amino acids. Catalyzes the reversible NADPH linked reduction of 3-dehydroshikimate (DHSA) to yield shikimate (SA). This is Shikimate dehydrogenase (NADP(+)) from Rhodopseudomonas palustris (strain TIE-1).